A 92-amino-acid polypeptide reads, in one-letter code: CRISPR-associated endoribonuclease Cas2 3 (92 aa).

D9 is a binding site for Mg(2+).

Belongs to the CRISPR-associated endoribonuclease Cas2 protein family. Homodimer, forms a heterotetramer with a Cas1 homodimer. Mg(2+) serves as cofactor.

Its function is as follows. CRISPR (clustered regularly interspaced short palindromic repeat), is an adaptive immune system that provides protection against mobile genetic elements (viruses, transposable elements and conjugative plasmids). CRISPR clusters contain sequences complementary to antecedent mobile elements and target invading nucleic acids. CRISPR clusters are transcribed and processed into CRISPR RNA (crRNA). Functions as a ssRNA-specific endoribonuclease. Involved in the integration of spacer DNA into the CRISPR cassette. The sequence is that of CRISPR-associated endoribonuclease Cas2 3 from Synechocystis sp. (strain ATCC 27184 / PCC 6803 / Kazusa).